Consider the following 386-residue polypeptide: Succinate--CoA ligase [ADP-forming] subunit beta (386 aa).

The region spanning 9–244 (KELLRQYGVA…LDEEDPKEIE (236 aa)) is the ATP-grasp domain. Residues K46, 53-55 (GRG), E99, C102, and E107 contribute to the ATP site. Mg(2+)-binding residues include N199 and D213. Substrate is bound by residues N264 and 321-323 (GIM).

It belongs to the succinate/malate CoA ligase beta subunit family. As to quaternary structure, heterotetramer of two alpha and two beta subunits. Mg(2+) is required as a cofactor.

The enzyme catalyses succinate + ATP + CoA = succinyl-CoA + ADP + phosphate. It catalyses the reaction GTP + succinate + CoA = succinyl-CoA + GDP + phosphate. It participates in carbohydrate metabolism; tricarboxylic acid cycle; succinate from succinyl-CoA (ligase route): step 1/1. Its function is as follows. Succinyl-CoA synthetase functions in the citric acid cycle (TCA), coupling the hydrolysis of succinyl-CoA to the synthesis of either ATP or GTP and thus represents the only step of substrate-level phosphorylation in the TCA. The beta subunit provides nucleotide specificity of the enzyme and binds the substrate succinate, while the binding sites for coenzyme A and phosphate are found in the alpha subunit. The polypeptide is Succinate--CoA ligase [ADP-forming] subunit beta (Halalkalibacterium halodurans (strain ATCC BAA-125 / DSM 18197 / FERM 7344 / JCM 9153 / C-125) (Bacillus halodurans)).